A 259-amino-acid polypeptide reads, in one-letter code: Hydroxyacylglutathione hydrolase (259 aa).

Positions 56, 58, 60, 61, 112, 133, and 171 each coordinate Zn(2+).

This sequence belongs to the metallo-beta-lactamase superfamily. Glyoxalase II family. Monomer. Zn(2+) is required as a cofactor.

The catalysed reaction is an S-(2-hydroxyacyl)glutathione + H2O = a 2-hydroxy carboxylate + glutathione + H(+). It participates in secondary metabolite metabolism; methylglyoxal degradation; (R)-lactate from methylglyoxal: step 2/2. Functionally, thiolesterase that catalyzes the hydrolysis of S-D-lactoyl-glutathione to form glutathione and D-lactic acid. This chain is Hydroxyacylglutathione hydrolase, found in Pseudomonas entomophila (strain L48).